The following is a 32-amino-acid chain: CSGLSTCALMKLSQDLHRFNSYPRTNVGAGTP.

Residues C1 and C7 are joined by a disulfide bond. P32 bears the Proline amide mark.

It belongs to the calcitonin family.

The protein localises to the secreted. Causes a rapid but short-lived drop in the level of calcium and phosphate in blood by promoting the incorporation of those ions in the bones. The sequence is that of Calcitonin from Aquarana catesbeiana (American bullfrog).